The chain runs to 85 residues: Large ribosomal subunit protein bL31B (85 aa).

The protein belongs to the bacterial ribosomal protein bL31 family. Type B subfamily. In terms of assembly, part of the 50S ribosomal subunit.

The polypeptide is Large ribosomal subunit protein bL31B (Stutzerimonas stutzeri (strain A1501) (Pseudomonas stutzeri)).